The following is a 342-amino-acid chain: MLERLQEICEEARAALNGACSLEELNEIRIRYLGKKGELTRVLRSMGSLSAEERPRIGQAANEIRDFIEKELAARTAALKEMVKEQKLRGDKIDVTLPGMPLPGGGKHPLTLVLEEIQRIFLGLGYSIVEGPEVETDYYNFEALNLPKDHPARDMQDTFFIGGEILLRTHTSPVQVRTMEKTAPGLPVKIIVPGKVYRRDDDATHSPMFHQVEGLAVDRRITFSDLKGTLDLFAREMFGPQTRTRFRPSYFPFTEPSAEVDISCVMCGGRGCRVCSQTGWLEILGSGMVHPRVLEVSGYNSEEVTGFAFGMGVERIAMLKYGIDDMRLLFENDLRFLQQFRS.

E255 is a Mg(2+) binding site.

It belongs to the class-II aminoacyl-tRNA synthetase family. Phe-tRNA synthetase alpha subunit type 1 subfamily. As to quaternary structure, tetramer of two alpha and two beta subunits. Requires Mg(2+) as cofactor.

The protein localises to the cytoplasm. It catalyses the reaction tRNA(Phe) + L-phenylalanine + ATP = L-phenylalanyl-tRNA(Phe) + AMP + diphosphate + H(+). The chain is Phenylalanine--tRNA ligase alpha subunit from Pelotomaculum thermopropionicum (strain DSM 13744 / JCM 10971 / SI).